A 251-amino-acid chain; its full sequence is Ubiquinone/menaquinone biosynthesis C-methyltransferase UbiE (251 aa).

Residues Thr-74, Asp-95, and 123–124 (NA) each bind S-adenosyl-L-methionine.

This sequence belongs to the class I-like SAM-binding methyltransferase superfamily. MenG/UbiE family.

It carries out the reaction a 2-demethylmenaquinol + S-adenosyl-L-methionine = a menaquinol + S-adenosyl-L-homocysteine + H(+). The catalysed reaction is a 2-methoxy-6-(all-trans-polyprenyl)benzene-1,4-diol + S-adenosyl-L-methionine = a 5-methoxy-2-methyl-3-(all-trans-polyprenyl)benzene-1,4-diol + S-adenosyl-L-homocysteine + H(+). Its pathway is quinol/quinone metabolism; menaquinone biosynthesis; menaquinol from 1,4-dihydroxy-2-naphthoate: step 2/2. It functions in the pathway cofactor biosynthesis; ubiquinone biosynthesis. Its function is as follows. Methyltransferase required for the conversion of demethylmenaquinol (DMKH2) to menaquinol (MKH2) and the conversion of 2-polyprenyl-6-methoxy-1,4-benzoquinol (DDMQH2) to 2-polyprenyl-3-methyl-6-methoxy-1,4-benzoquinol (DMQH2). The sequence is that of Ubiquinone/menaquinone biosynthesis C-methyltransferase UbiE from Shewanella woodyi (strain ATCC 51908 / MS32).